Here is a 3801-residue protein sequence, read N- to C-terminus: Lysosomal-trafficking regulator (3801 aa).

Residues 148 to 173 (KITHRYSVRDARKTQLSTSDSEANSD) are disordered. S164 bears the Phosphoserine mark. Position 165 is a phosphothreonine (T165). Phosphoserine is present on S166. The WD 1 repeat unit spans residues 662 to 700 (ELSSSLSSPSYRFQGILPSSGSEDLLWKWDALKAYQNFV). The segment covering 1181-1190 (AMTEKSHQSA) has biased composition (basic and acidic residues). Disordered stretches follow at residues 1181-1203 (AMTE…FSEE) and 1221-1256 (YEAD…SPND). Acidic residues predominate over residues 1221-1238 (YEADSESNPEDGETQDDG). Positions 1246 to 1256 (EGFSASSSPND) are enriched in polar residues. Phosphoserine occurs at positions 1509 and 1510. The stretch at 1582 to 1626 (SQENIFLPSKWQHLVLTYLQQPQGKRRIHGKISIWVSGQRKPDVT) is one WD 2 repeat. 5 positions are modified to phosphoserine: S2105, S2124, S2213, S2217, and S2264. Over residues 2205-2215 (KQLGAEPRSED) the composition is skewed to basic and acidic residues. The segment at 2205–2224 (KQLGAEPRSEDDSPGDESCP) is disordered. Residues 3009–3115 (AASESIRVNR…VRDDVYHNIL (107 aa)) enclose the BEACH-type PH domain. Positions 3120–3422 (PNLLEYGNIT…QLFHMAHVSR (303 aa)) constitute a BEACH domain. 5 WD repeats span residues 3563–3602 (SQQY…STPS), 3614–3653 (GHTE…YVQS), 3656–3699 (GHKS…VGHV), 3700–3744 (HCRE…PVRE), and 3749–3788 (KSNK…RLKQ).

As to quaternary structure, interacts with CPAP, LIP8 and ZNF521. As to expression, abundantly expressed in adult and fetal thymus, peripheral blood leukocytes, bone marrow and several regions of the adult brain.

It localises to the cytoplasm. Its function is as follows. Adapter protein that regulates and/or fission of intracellular vesicles such as lysosomes. Might regulate trafficking of effectors involved in exocytosis. In cytotoxic T-cells and natural killer (NK) cells, has role in the regulation of size, number and exocytosis of lytic granules. In macrophages and dendritic cells, regulates phagosome maturation by controlling the conversion of early phagosomal compartments into late phagosomes. In macrophages and dendritic cells, specifically involved in TLR3- and TLR4-induced production of pro-inflammatory cytokines by regulating the endosomal TLR3- TICAM1/TRIF and TLR4- TICAM1/TRIF signaling pathways. The polypeptide is Lysosomal-trafficking regulator (LYST) (Homo sapiens (Human)).